A 477-amino-acid chain; its full sequence is M-phase inducer phosphatase 3 (477 aa).

The disordered stretch occupies residues 1–20 (MSAEFFSSKREEGSLASGPS). S2 is subject to N-acetylserine. Residues S20 and S38 each carry the phosphoserine modification. At T48 the chain carries Phosphothreonine; by CDK1. A phosphoserine mark is found at S58, S62, and S65. Position 68 is a phosphothreonine; by CDK1 (T68). S123 is subject to Phosphoserine; by CDK1. Residue S130 is modified to Phosphoserine. T131 carries the post-translational modification Phosphothreonine. Residue S169 is modified to Phosphoserine; by CDK1. Phosphoserine; by PLK3 occurs at positions 192 and 199. Phosphoserine; by CDK1 is present on S218. S220 carries the post-translational modification Phosphoserine; by CHEK1, CHEK2, BRSK1, MAPK14 AND MARK3. Positions 325-432 (LIEKFYIIDC…FFPEYMELCE (108 aa)) constitute a Rhodanese domain. The active site involves C381. Residue S476 is modified to Phosphoserine.

Belongs to the MPI phosphatase family. Interacts with MAPK14 and 14-3-3 proteins. When phosphorylated on Ser-130 and/or Thr-131, interacts with PLK1. Interacts with MARK3/C-TAK1. Post-translationally, phosphorylated by CHEK1 and MAPK14 at Ser-220. This phosphorylation creates a binding site for 14-3-3 protein and inhibits the phosphatase. Phosphorylated by PLK4. Phosphorylated by PLK1, leading to activate the phosphatase activity. Phosphorylation by PLK3 at Ser-192 promotes nuclear translocation. Ser-199 is a minor phosphorylation site. Phosphorylation by CDK1 occurs at G2 and G2-M transition and leads to increased activity.

Its subcellular location is the nucleus. The enzyme catalyses O-phospho-L-tyrosyl-[protein] + H2O = L-tyrosyl-[protein] + phosphate. In terms of biological role, functions as a dosage-dependent inducer in mitotic control. Tyrosine protein phosphatase required for progression of the cell cycle. When phosphorylated, highly effective in activating G2 cells into prophase. Directly dephosphorylates CDK1 and activates its kinase activity. In Bos taurus (Bovine), this protein is M-phase inducer phosphatase 3 (CDC25C).